The primary structure comprises 590 residues: Arginine--tRNA ligase (590 aa).

Positions 126-136 (PNVAKEMHVGH) match the 'HIGH' region motif.

This sequence belongs to the class-I aminoacyl-tRNA synthetase family. As to quaternary structure, monomer.

It localises to the cytoplasm. The enzyme catalyses tRNA(Arg) + L-arginine + ATP = L-arginyl-tRNA(Arg) + AMP + diphosphate. The sequence is that of Arginine--tRNA ligase from Streptomyces avermitilis (strain ATCC 31267 / DSM 46492 / JCM 5070 / NBRC 14893 / NCIMB 12804 / NRRL 8165 / MA-4680).